The chain runs to 386 residues: Uroporphyrinogen decarboxylase (386 aa).

The coproporphyrinogen I site is built by arginine 44, alanine 46, arginine 48, arginine 57, aspartate 93, tyrosine 170, serine 225, and histidine 364. Residues arginine 44, alanine 46, and arginine 48 each contribute to the coproporphyrinogen III site. Coproporphyrinogen III-binding residues include aspartate 93, tyrosine 170, serine 225, and histidine 364.

This sequence belongs to the uroporphyrinogen decarboxylase family. In terms of assembly, homodimer.

The protein resides in the cytoplasm. It localises to the cytosol. It carries out the reaction uroporphyrinogen III + 4 H(+) = coproporphyrinogen III + 4 CO2. Its pathway is porphyrin-containing compound metabolism; protoporphyrin-IX biosynthesis; coproporphyrinogen-III from 5-aminolevulinate: step 4/4. Catalyzes the decarboxylation of four acetate groups of uroporphyrinogen-III to yield coproporphyrinogen-III. In Drosophila virilis (Fruit fly), this protein is Uroporphyrinogen decarboxylase.